Here is a 748-residue protein sequence, read N- to C-terminus: Semaphorin-3B (748 aa).

An N-terminal signal peptide occupies residues 1 to 25; it reads MGRAEAAAMIPGLALLWVAGLGDTA. One can recognise a Sema domain in the interval 30–512; the sequence is RLRLSFQELQ…SRSAVAQIAL (483 aa). Asn-82 carries an N-linked (GlcNAc...) asparagine glycan. The cysteines at positions 102 and 113 are disulfide-linked. The N-linked (GlcNAc...) asparagine glycan is linked to Asn-124. 5 cysteine pairs are disulfide-bonded: Cys-131-Cys-140, Cys-268-Cys-379, Cys-292-Cys-339, Cys-515-Cys-533, and Cys-643-Cys-709. An Ig-like C2-type domain is found at 561–659; it reads PSTLCSGDSS…FSQPLRRLVL (99 aa). A disordered region spans residues 708 to 748; sequence MCRPQPGHHSVAADSRRKGRNRRMHVSELRAERGPRSAAHW. Over residues 732–742 the composition is skewed to basic and acidic residues; sequence HVSELRAERGP.

Belongs to the semaphorin family.

The protein resides in the secreted. Functionally, inhibits axonal extension by providing local signals to specify territories inaccessible for growing axons. The sequence is that of Semaphorin-3B (Sema3b) from Mus musculus (Mouse).